We begin with the raw amino-acid sequence, 307 residues long: Transmembrane and coiled-coil domain-containing protein 5B (307 aa).

Residues 20 to 212 (TLEAIKQNLK…SKAQNDSSQV (193 aa)) adopt a coiled-coil conformation. A helical membrane pass occupies residues 246-268 (YLFFMVMIVIRLLGYVFFHLQYV).

This sequence belongs to the TMCO5 family.

It localises to the membrane. The chain is Transmembrane and coiled-coil domain-containing protein 5B (Tmco5b) from Mus musculus (Mouse).